A 223-amino-acid polypeptide reads, in one-letter code: Octanoyltransferase (223 aa).

One can recognise a BPL/LPL catalytic domain in the interval G31 to P216. Substrate-binding positions include R76–H83, A145–G147, and G159–A161. The active-site Acyl-thioester intermediate is C177.

Belongs to the LipB family.

The protein localises to the cytoplasm. It catalyses the reaction octanoyl-[ACP] + L-lysyl-[protein] = N(6)-octanoyl-L-lysyl-[protein] + holo-[ACP] + H(+). The protein operates within protein modification; protein lipoylation via endogenous pathway; protein N(6)-(lipoyl)lysine from octanoyl-[acyl-carrier-protein]: step 1/2. Its function is as follows. Catalyzes the transfer of endogenously produced octanoic acid from octanoyl-acyl-carrier-protein onto the lipoyl domains of lipoate-dependent enzymes. Lipoyl-ACP can also act as a substrate although octanoyl-ACP is likely to be the physiological substrate. The chain is Octanoyltransferase from Chloroflexus aurantiacus (strain ATCC 29366 / DSM 635 / J-10-fl).